We begin with the raw amino-acid sequence, 635 residues long: Membrane protein insertase YidC (635 aa).

A helical membrane pass occupies residues L8 to P28. Residues P33 to Q61 are disordered. The next 4 membrane-spanning stretches (helical) occupy residues M396–F416, L470–I490, S528–M548, and I564–V584. The segment at I615–K635 is disordered. The span at K624–K635 shows a compositional bias: basic and acidic residues.

It belongs to the OXA1/ALB3/YidC family. Type 1 subfamily. In terms of assembly, interacts with the Sec translocase complex via SecD. Specifically interacts with transmembrane segments of nascent integral membrane proteins during membrane integration.

Its subcellular location is the cell inner membrane. Functionally, required for the insertion and/or proper folding and/or complex formation of integral membrane proteins into the membrane. Involved in integration of membrane proteins that insert both dependently and independently of the Sec translocase complex, as well as at least some lipoproteins. Aids folding of multispanning membrane proteins. The sequence is that of Membrane protein insertase YidC from Paracoccus denitrificans (strain Pd 1222).